A 389-amino-acid polypeptide reads, in one-letter code: NADH-dependent butanol dehydrogenase A (389 aa).

Belongs to the iron-containing alcohol dehydrogenase family. Homodimer.

It functions in the pathway alcohol metabolism; butanol biosynthesis. In Clostridium acetobutylicum (strain ATCC 824 / DSM 792 / JCM 1419 / IAM 19013 / LMG 5710 / NBRC 13948 / NRRL B-527 / VKM B-1787 / 2291 / W), this protein is NADH-dependent butanol dehydrogenase A (bdhA).